A 452-amino-acid polypeptide reads, in one-letter code: Probable receptor-like protein kinase At5g20050 (452 aa).

A signal peptide spans 1–23 (MEDKKANIIATILILALVVVIIA). Over 24 to 33 (ARVSLKLSKT) the chain is Extracellular. The helical transmembrane segment at 34 to 54 (FYLIAGVDISLILAVICFLII) threads the bilayer. Residues 55 to 452 (RSRYNKERKL…SSIISPISPR (398 aa)) lie on the Cytoplasmic side of the membrane. Residues 103–392 (DGFRSLIGKG…MVIEMLEGRV (290 aa)) form the Protein kinase domain. Residues 109-117 (IGKGGSGSV) and lysine 131 each bind ATP. Tyrosine 178 is modified (phosphotyrosine). Aspartate 236 serves as the catalytic Proton acceptor. 2 positions are modified to phosphothreonine: threonine 270 and threonine 275.

Belongs to the protein kinase superfamily. Ser/Thr protein kinase family.

The protein resides in the membrane. It catalyses the reaction L-seryl-[protein] + ATP = O-phospho-L-seryl-[protein] + ADP + H(+). It carries out the reaction L-threonyl-[protein] + ATP = O-phospho-L-threonyl-[protein] + ADP + H(+). This Arabidopsis thaliana (Mouse-ear cress) protein is Probable receptor-like protein kinase At5g20050.